Consider the following 674-residue polypeptide: Acetyl-coenzyme A synthetase (674 aa).

Residues 201-204 (RGGR) and Thr320 contribute to the CoA site. Residues 396–398 (GEP), 420–425 (DTYWQT), Asp518, and Arg533 each bind ATP. Ser541 contributes to the CoA binding site. Residue Arg544 participates in ATP binding. Arg603 serves as a coordination point for CoA.

This sequence belongs to the ATP-dependent AMP-binding enzyme family.

The catalysed reaction is acetate + ATP + CoA = acetyl-CoA + AMP + diphosphate. This Dictyostelium discoideum (Social amoeba) protein is Acetyl-coenzyme A synthetase (acsA).